Reading from the N-terminus, the 497-residue chain is Cytochrome P450 monooxygenase 151 (497 aa).

Residues 1-21 traverse the membrane as a helical segment; sequence MTDLVPVYYAFAGVVAALLFY. 2 N-linked (GlcNAc...) asparagine glycosylation sites follow: Asn292 and Asn397. Cys441 provides a ligand contact to heme.

This sequence belongs to the cytochrome P450 family. Heme serves as cofactor.

The protein localises to the membrane. The protein operates within secondary metabolite biosynthesis. Functionally, cytochrome P450 monooxygenase that is able to use dehydroabietic acid and testosterone as substrates for oxidation, suggesting that the natural substrate(s) may be structurally related to steroid compounds. This chain is Cytochrome P450 monooxygenase 151, found in Postia placenta (strain ATCC 44394 / Madison 698-R) (Brown rot fungus).